A 417-amino-acid polypeptide reads, in one-letter code: MDKLKISANGPLNGEITVSGAKNAALPLMCAGLLTSGTLRLKNVPMLADVATTQKLLQGMGARVLTDNISEFEINGGTVNNTCAPYELVRTMRASILVLGPTLARFGEAQVSLPGGCAIGSRPVNQHLKGLEAMGAEIAIEHGYVKAKGKLKGARVAMDVVTVGGTENLLMAATLAEGTTVLENCAIEPEVVDLAECLVKMGAKISGIGTSTMIVEGAGELYGCEHSVVPDRIEAGTFLCAVAITGGRVVLRNAAPKTMEVVLDKLVEAGAVIEAGDDWIAIDMRQRPKAVDIRTVVHPGFPTDMQAQFMALNAVAEGSCRVVETIFENRFMHVPELNRMGANITTEGNTAFVQGVERLSGAVVKATDLRASASLVIAGLAARGETVVERIYHLDRGYENIEKKLGSVGANIERVSG.

22–23 (KN) is a binding site for phosphoenolpyruvate. Residue Arg-93 participates in UDP-N-acetyl-alpha-D-glucosamine binding. The active-site Proton donor is the Cys-117. Position 117 is a 2-(S-cysteinyl)pyruvic acid O-phosphothioketal (Cys-117). UDP-N-acetyl-alpha-D-glucosamine contacts are provided by Asp-304 and Ile-326.

The protein belongs to the EPSP synthase family. MurA subfamily.

It localises to the cytoplasm. The catalysed reaction is phosphoenolpyruvate + UDP-N-acetyl-alpha-D-glucosamine = UDP-N-acetyl-3-O-(1-carboxyvinyl)-alpha-D-glucosamine + phosphate. Its pathway is cell wall biogenesis; peptidoglycan biosynthesis. Cell wall formation. Adds enolpyruvyl to UDP-N-acetylglucosamine. The chain is UDP-N-acetylglucosamine 1-carboxyvinyltransferase from Neisseria gonorrhoeae (strain ATCC 700825 / FA 1090).